The chain runs to 408 residues: Phosphoglycerate kinase (408 aa).

Substrate contacts are provided by residues 22 to 24 (DIN), Arg-39, 60 to 63 (HQSR), Arg-117, and Arg-157. ATP contacts are provided by residues Glu-332 and 358 to 361 (GGHT).

This sequence belongs to the phosphoglycerate kinase family. Monomer.

The protein resides in the cytoplasm. The catalysed reaction is (2R)-3-phosphoglycerate + ATP = (2R)-3-phospho-glyceroyl phosphate + ADP. Its pathway is carbohydrate degradation; glycolysis; pyruvate from D-glyceraldehyde 3-phosphate: step 2/5. This Thermoplasma acidophilum (strain ATCC 25905 / DSM 1728 / JCM 9062 / NBRC 15155 / AMRC-C165) protein is Phosphoglycerate kinase (pgk).